We begin with the raw amino-acid sequence, 497 residues long: Probable malate:quinone oxidoreductase (497 aa).

Belongs to the MQO family. FAD is required as a cofactor.

It carries out the reaction (S)-malate + a quinone = a quinol + oxaloacetate. The protein operates within carbohydrate metabolism; tricarboxylic acid cycle; oxaloacetate from (S)-malate (quinone route): step 1/1. The polypeptide is Probable malate:quinone oxidoreductase (Tolumonas auensis (strain DSM 9187 / NBRC 110442 / TA 4)).